The primary structure comprises 152 residues: UPF0735 ACT domain-containing protein SAS1579 (152 aa).

The region spanning 75 to 150 is the ACT domain; that stretch reads TLILYVTDIV…YVSKVELISM (76 aa).

The protein belongs to the UPF0735 family.

The protein is UPF0735 ACT domain-containing protein SAS1579 of Staphylococcus aureus (strain MSSA476).